Here is an 852-residue protein sequence, read N- to C-terminus: Lon protease homolog 2, peroxisomal (852 aa).

N-acetylserine is present on Ser2. In terms of domain architecture, Lon N-terminal spans Leu13–Ile222. Gly375–Thr382 is a binding site for ATP. The Lon proteolytic domain occupies Leu651 to Gly837. Residues Ser743 and Lys786 contribute to the active site. The short motif at Ser850–Leu852 is the Microbody targeting signal element.

Belongs to the peptidase S16 family. In terms of assembly, interacts with PEX5. Interacts with TYSND1. May interact with enzymes involved in beta-oxidation of fatty acids, including ACOX1/AOX.

It localises to the peroxisome matrix. The catalysed reaction is Hydrolysis of proteins in presence of ATP.. In terms of biological role, ATP-dependent serine protease that mediates the selective degradation of misfolded and unassembled polypeptides in the peroxisomal matrix. Necessary for type 2 peroxisome targeting signal (PTS2)-containing protein processing and facilitates peroxisome matrix protein import. May indirectly regulate peroxisomal fatty acid beta-oxidation through degradation of the self-processed forms of TYSND1. This Pongo abelii (Sumatran orangutan) protein is Lon protease homolog 2, peroxisomal.